We begin with the raw amino-acid sequence, 382 residues long: D-galactonate dehydratase (382 aa).

Asp183 serves as a coordination point for Mg(2+). His185 (proton donor) is an active-site residue. 2 residues coordinate Mg(2+): Glu209 and Glu235. His285 (proton acceptor) is an active-site residue.

This sequence belongs to the mandelate racemase/muconate lactonizing enzyme family. GalD subfamily. The cofactor is Mg(2+).

The catalysed reaction is D-galactonate = 2-dehydro-3-deoxy-D-galactonate + H2O. It functions in the pathway carbohydrate acid metabolism; D-galactonate degradation; D-glyceraldehyde 3-phosphate and pyruvate from D-galactonate: step 1/3. Catalyzes the dehydration of D-galactonate to 2-keto-3-deoxy-D-galactonate. This chain is D-galactonate dehydratase, found in Salmonella choleraesuis (strain SC-B67).